The following is a 485-amino-acid chain: MNNLRVRFAPSPTGAIHIGNIRTALFNYLFSRSEGATFVLRIEDTDLERSSKEFEELIFKELEWLGIEWDEGPDKPGPYGPYRQSERLEIYHKFAQKLIEEKKAYRCYCTPEELEEDRRKAVERGDIPCYSGRCRYLTKEQEEAFIREGRKPVIRFIIPDDEVIEFEDMIKGKITIKSDTLGGDMVIVKSDGMPTYNFAVVIDDALMKITHVIRGEDHIYNTPKQILIYKALGFEIPKFAHAPLILGPDRTKLSKRHGNTYIGQYRELGYLPEAMFNFLSLLSWSPEDNVEIMSKEEIIKKFNFRRIHSANPVFDIEKLNWMNQQYIQKSSIERIVDLAIPHLRRAGYIDGIDDMVYNWLKDVISLYKDGLQYVAQITEKAKMFFVEEVEYSDETVKILNSPNSKIVLEVVKKVIEEADEITEEYVKDLLKKLQKETKVKGKEFFMPIRVAITGEDHGPELVKIIPLLGKDKVINRLKKAINLIK.

The 'HIGH' region motif lies at proline 10 to asparagine 20. Positions lysine 252 to arginine 256 match the 'KMSKS' region motif. ATP is bound at residue lysine 255.

The protein belongs to the class-I aminoacyl-tRNA synthetase family. Glutamate--tRNA ligase type 1 subfamily. Monomer.

It is found in the cytoplasm. The catalysed reaction is tRNA(Glu) + L-glutamate + ATP = L-glutamyl-tRNA(Glu) + AMP + diphosphate. Catalyzes the attachment of glutamate to tRNA(Glu) in a two-step reaction: glutamate is first activated by ATP to form Glu-AMP and then transferred to the acceptor end of tRNA(Glu). In Thermoanaerobacter pseudethanolicus (strain ATCC 33223 / 39E) (Clostridium thermohydrosulfuricum), this protein is Glutamate--tRNA ligase 1.